The chain runs to 247 residues: ATP synthase delta chain, chloroplastic (247 aa).

Residues M1–R60 constitute a chloroplast transit peptide.

It belongs to the ATPase delta chain family. As to quaternary structure, F-type ATPases have 2 components, CF(1) - the catalytic core - and CF(0) - the membrane proton channel. CF(1) has five subunits: alpha(3), beta(3), gamma(1), delta(1), epsilon(1). CF(0) has three main subunits: a, b and c.

The protein localises to the plastid. Its subcellular location is the chloroplast thylakoid membrane. Its function is as follows. This protein seems to be part of the stalk that links CF(0) to CF(1). It either transmits conformational changes from CF(0) into CF(1) or is implicated in proton conduction. The sequence is that of ATP synthase delta chain, chloroplastic (ATPD) from Sorghum bicolor (Sorghum).